Here is an 82-residue protein sequence, read N- to C-terminus: Delta-actitoxin-Aeq2b 1 (82 aa).

The first 19 residues, 1 to 19 (MNRLMILVFAAVILALASA), serve as a signal peptide directing secretion. Positions 20–26 (DEDVDIA) are excised as a propeptide. Intrachain disulfides connect Cys32/Cys79, Cys34/Cys69, and Cys62/Cys80.

This sequence belongs to the sea anemone sodium channel inhibitory toxin family. Type I subfamily.

It is found in the secreted. Its subcellular location is the nematocyst. In terms of biological role, binds specifically to voltage-gated sodium channels (Nav), thereby delaying their inactivation during signal transduction. Causes death to crabs. This Actinia equina (Beadlet anemone) protein is Delta-actitoxin-Aeq2b 1.